Reading from the N-terminus, the 401-residue chain is NADH-ubiquinone oxidoreductase 49 kDa subunit (401 aa).

The protein belongs to the complex I 49 kDa subunit family.

The protein localises to the mitochondrion. The catalysed reaction is a ubiquinone + NADH + 5 H(+)(in) = a ubiquinol + NAD(+) + 4 H(+)(out). Its function is as follows. Core subunit of the mitochondrial membrane respiratory chain NADH dehydrogenase (Complex I) that is believed to belong to the minimal assembly required for catalysis. Complex I functions in the transfer of electrons from NADH to the respiratory chain. The immediate electron acceptor for the enzyme is believed to be ubiquinone. Component of the iron-sulfur (IP) fragment of the enzyme. This is NADH-ubiquinone oxidoreductase 49 kDa subunit (NAD7) from Acanthamoeba castellanii (Amoeba).